Consider the following 368-residue polypeptide: Methionine import ATP-binding protein MetN (368 aa).

Positions 5 to 260 (IELNNLSVQF…PKEALTKQFI (256 aa)) constitute an ABC transporter domain. 41 to 48 (GYSGAGKS) lines the ATP pocket.

This sequence belongs to the ABC transporter superfamily. Methionine importer (TC 3.A.1.24) family. The complex is composed of two ATP-binding proteins (MetN), two transmembrane proteins (MetI) and a solute-binding protein (MetQ).

It is found in the cell membrane. It catalyses the reaction L-methionine(out) + ATP + H2O = L-methionine(in) + ADP + phosphate + H(+). It carries out the reaction D-methionine(out) + ATP + H2O = D-methionine(in) + ADP + phosphate + H(+). Functionally, part of the ABC transporter complex MetNIQ involved in methionine import. Responsible for energy coupling to the transport system. In Lactococcus lactis subsp. lactis (strain IL1403) (Streptococcus lactis), this protein is Methionine import ATP-binding protein MetN.